The following is a 470-amino-acid chain: Desmin (470 aa).

The tract at residues 2–108 (SQAYSSSQRV…QEFLTTRTNE (107 aa)) is head. The residue at position 7 (serine 7) is a Phosphoserine; by CDK1. A Phosphoserine; by AURKB modification is found at serine 12. Arginine 16 is modified (omega-N-methylarginine). Residue threonine 17 is modified to Phosphothreonine; by AURKB and ROCK1. Serine 28 is subject to Phosphoserine; by CDK1. Serine 31 carries the post-translational modification Phosphoserine. At serine 32 the chain carries Phosphoserine; by CDK1. Arginine 37 is subject to Asymmetric dimethylarginine; alternate. At arginine 37 the chain carries Omega-N-methylarginine; alternate. Residue serine 45 is modified to Phosphoserine. The residue at position 58 (arginine 58) is an ADP-ribosylarginine. The residue at position 60 (serine 60) is a Phosphoserine; by AURKB. Serine 68 is subject to Phosphoserine. Residue arginine 70 is modified to Omega-N-methylarginine. 2 positions are modified to phosphothreonine; by ROCK1: threonine 76 and threonine 77. Serine 81 carries the post-translational modification Phosphoserine. One can recognise an IF rod domain in the interval 108–416 (EKVELQELND…KLLEGEESRI (309 aa)). The coil 1A stretch occupies residues 109-141 (KVELQELNDRFANYIEKVRFLEQQNAALAAEVN). A linker 1 region spans residues 142–151 (RLKGREPTRV). A coil 1B region spans residues 152-252 (AELYEEELRE…HEEEIRELQA (101 aa)). The tract at residues 253–268 (QLQEQQVQVEMDMSKP) is linker 12. The interaction with NEB stretch occupies residues 268 to 415 (PDLTAALRDI…RKLLEGEESR (148 aa)). Positions 269-287 (DLTAALRDIRAQYETIAAK) are coil 2A. Positions 288 to 295 (NISEAEEW) are linker 2. Residues serine 290, serine 358, serine 361, and serine 424 each carry the phosphoserine modification. Residues 296-412 (YKSKVSDLTQ…ATYRKLLEGE (117 aa)) are coil 2B. Residues 413–470 (ESRINLPIQTYSALNFRETSPEQRGSEVHTKKTVMIKTIETRDGEVVSEATQQQHEVL) are tail. The interval 438–453 (SEVHTKKTVMIKTIET) is interaction with CRYAB.

It belongs to the intermediate filament family. In terms of assembly, homomer. Interacts with DST. Interacts with MTM1. Interacts with EPPK1; interaction is dependent of higher-order structure of intermediate filament. Interacts with CRYAB. Interacts with NEB (via nebulin repeats 160-164). Interacts (via rod region) with NEBL (via nebulin repeats 1-5). Interacts with ASB2 isoform 1; the interaction targets DES for proteasomal degradation. Interacts with PLEC isoform 1C. Interacts with PKP1. Interacts with FLII. In terms of processing, ADP-ribosylation prevents ability to form intermediate filaments. Phosphorylation at Ser-7, Ser-28 and Ser-32 by CDK1, phosphorylation at Ser-60 by AURKB and phosphorylation at Thr-76 by ROCK1 contribute to efficient separation of desmin intermediate filaments during mitosis. Post-translationally, ubiquitination by a SCF-like complex containing ASB2 isoform 1 leads to proteasomal degradation.

The protein resides in the cytoplasm. Its subcellular location is the myofibril. It localises to the sarcomere. The protein localises to the z line. It is found in the cell membrane. The protein resides in the sarcolemma. Its subcellular location is the nucleus. It localises to the cell tip. The protein localises to the nucleus envelope. In terms of biological role, muscle-specific type III intermediate filament essential for proper muscular structure and function. Plays a crucial role in maintaining the structure of sarcomeres, inter-connecting the Z-disks and forming the myofibrils, linking them not only to the sarcolemmal cytoskeleton, but also to the nucleus and mitochondria, thus providing strength for the muscle fiber during activity. In adult striated muscle they form a fibrous network connecting myofibrils to each other and to the plasma membrane from the periphery of the Z-line structures. May act as a sarcomeric microtubule-anchoring protein: specifically associates with detyrosinated tubulin-alpha chains, leading to buckled microtubules and mechanical resistance to contraction. Required for nuclear membrane integrity, via anchoring at the cell tip and nuclear envelope, resulting in maintenance of microtubule-derived intracellular mechanical forces. Contributes to the transcriptional regulation of the NKX2-5 gene in cardiac progenitor cells during a short period of cardiomyogenesis and in cardiac side population stem cells in the adult. Plays a role in maintaining an optimal conformation of nebulette (NEB) on heart muscle sarcomeres to bind and recruit cardiac alpha-actin. The polypeptide is Desmin (DES) (Homo sapiens (Human)).